The sequence spans 592 residues: PiggyBac transposable element-derived protein 2 (592 aa).

The segment at 31–69 is disordered; the sequence is EEEESNNNREEIFIAPPDNAAGEFTDEDSGDEDSQRGAH.

The protein is PiggyBac transposable element-derived protein 2 (PGBD2) of Homo sapiens (Human).